A 171-amino-acid polypeptide reads, in one-letter code: Photosystem I assembly protein Ycf3 (171 aa).

TPR repeat units follow at residues alanine 35–proline 68, serine 72–leucine 105, and glycine 120–asparagine 153.

The protein belongs to the Ycf3 family.

It is found in the plastid. The protein resides in the chloroplast thylakoid membrane. In terms of biological role, essential for the assembly of the photosystem I (PSI) complex. May act as a chaperone-like factor to guide the assembly of the PSI subunits. This is Photosystem I assembly protein Ycf3 from Psilotum nudum (Whisk fern).